Here is a 356-residue protein sequence, read N- to C-terminus: Glutamine synthetase cytosolic isozyme (356 aa).

The GS beta-grasp domain occupies 19–99 (IIAEYIWIGG…VMCDAYTPAG (81 aa)). Residues 38-66 (RTLPGPVTDPSQLPKWNYDGSSTGQAPGE) form a disordered region. Residues 106–356 (KRHAAAKIFS…IADTTILWKP (251 aa)) enclose the GS catalytic domain.

The protein belongs to the glutamine synthetase family. In terms of assembly, homooctamer.

It is found in the cytoplasm. It catalyses the reaction L-glutamate + NH4(+) + ATP = L-glutamine + ADP + phosphate + H(+). This chain is Glutamine synthetase cytosolic isozyme, found in Medicago sativa (Alfalfa).